A 91-amino-acid polypeptide reads, in one-letter code: Cytoplasmic envelopment protein 3 (91 aa).

The N-myristoyl glycine; by host moiety is linked to residue Gly-2. The interval 48–81 is disordered; the sequence is NMGTDEYDEEDEGGDGGEGREPQPEVKTTPYPKR. Acidic residues predominate over residues 52 to 62; sequence DEYDEEDEGGD.

It belongs to the herpesviridae cytoplasmic envelopment protein 3 family. Interacts with cytoplasmic envelopment protein 2; this interaction is essential for the proper localization of each protein to the assembly complex and thus for the production of infectious virus. Post-translationally, myristoylation and palmitoylation (probably on one or more of the nearby cysteines at the N-terminus) enable membrane-binding and Golgi apparatus-specific targeting and are essential for efficient packaging. In terms of processing, phosphorylated. Phosphorylation does not seem to be required for recycling to the host Golgi apparatus. Packaging is selective for underphosphorylated forms.

The protein localises to the virion tegument. It is found in the virion membrane. The protein resides in the host cell membrane. Its subcellular location is the host Golgi apparatus membrane. In terms of biological role, plays an important role in the cytoplasmic envelopment of tegument proteins and capsids during the assembly and egress processes. Also participates in viral entry at the fusion step probably by regulating the core fusion machinery. The polypeptide is Cytoplasmic envelopment protein 3 (38) (Equus caballus (Horse)).